A 398-amino-acid chain; its full sequence is Exodeoxyribonuclease 7 large subunit (398 aa).

The protein belongs to the XseA family. Heterooligomer composed of large and small subunits.

The protein localises to the cytoplasm. The enzyme catalyses Exonucleolytic cleavage in either 5'- to 3'- or 3'- to 5'-direction to yield nucleoside 5'-phosphates.. Functionally, bidirectionally degrades single-stranded DNA into large acid-insoluble oligonucleotides, which are then degraded further into small acid-soluble oligonucleotides. In Anaplasma phagocytophilum (strain HZ), this protein is Exodeoxyribonuclease 7 large subunit.